We begin with the raw amino-acid sequence, 204 residues long: MGAYKYMQELWRKKQSDVMRFLLRVRCWQYRQLSSLHRTPKPTRPDKARRLGYKAKQGYVIYRIRVRRGGRKRPVPKGATYGKPVHHGVNQIKFARSLQSTAEERAGRHCGGLRVLSSYWVGEDSTYKFFEVILVDIFHKAIRRNPDTQWITKAVHKHREMRGLTSAGKKSRGLGKGHKFHLTIGGSRRAAWRRRNTLQLHRYR.

This sequence belongs to the eukaryotic ribosomal protein eL15 family. Component of the large ribosomal subunit.

It localises to the cytoplasm. Functionally, component of the large ribosomal subunit. The ribosome is a large ribonucleoprotein complex responsible for the synthesis of proteins in the cell. The polypeptide is Large ribosomal subunit protein eL15 (rpl15) (Paramisgurnus dabryanus).